Here is a 515-residue protein sequence, read N- to C-terminus: N-fatty-acyl-amino acid synthase/hydrolase PM20D1.1 (515 aa).

Positions Met-1–Gly-34 are cleaved as a signal peptide. Residues Asn-50, Asn-87, and Asn-118 are each glycosylated (N-linked (GlcNAc...) asparagine). Position 140 (His-140) interacts with Zn(2+). Residue Asp-142 is part of the active site. Asp-173 is a Zn(2+) binding site. The Proton acceptor role is filled by Glu-207. The Zn(2+) site is built by Glu-208, Asp-234, and His-480.

This sequence belongs to the peptidase M20A family. It depends on Zn(2+) as a cofactor.

The protein resides in the secreted. The catalysed reaction is an N-acyl-L-amino acid + H2O = an L-alpha-amino acid + a carboxylate. It catalyses the reaction an N-acyl-aromatic L-alpha-amino acid + H2O = an aromatic L-alpha-amino acid + a carboxylate. The enzyme catalyses N-(5Z,8Z,11Z,14Z)-eicosatetraenoyl-glycine + H2O = (5Z,8Z,11Z,14Z)-eicosatetraenoate + glycine. It carries out the reaction N-hexadecanoyl-L-phenylalanine + H2O = hexadecanoate + L-phenylalanine. The catalysed reaction is N-octadecanoyl-L-phenylalanine + H2O = octadecanoate + L-phenylalanine. It catalyses the reaction N-(4Z,7Z,10Z,13Z,16Z,19Z-docosahexaenoyl)-L-phenylalanine + H2O = (4Z,7Z,10Z,13Z,16Z,19Z)-docosahexaenoate + L-phenylalanine. The enzyme catalyses N-(9Z-octadecenoyl)-L-asparagine + H2O = L-asparagine + (9Z)-octadecenoate. It carries out the reaction (9Z)-octadecenoate + glycine = N-(9Z-octadecenoyl)glycine + H2O. The catalysed reaction is N-(9Z-octadecenoyl)-L-lysine + H2O = L-lysine + (9Z)-octadecenoate. It catalyses the reaction N-(9Z-octadecenoyl)-L-methionine + H2O = (9Z)-octadecenoate + L-methionine. The enzyme catalyses N-(9Z-octadecenoyl)-L-serine + H2O = L-serine + (9Z)-octadecenoate. It carries out the reaction N-(9Z-octadecenoyl)-L-tryptophan + H2O = L-tryptophan + (9Z)-octadecenoate. The catalysed reaction is N-(9Z-octadecenoyl)-L-tyrosine + H2O = L-tyrosine + (9Z)-octadecenoate. It catalyses the reaction N-(9Z-octadecenoyl)-L-glutamine + H2O = L-glutamine + (9Z)-octadecenoate. The enzyme catalyses N-(5Z,8Z,11Z,14Z-eicosatetraenoyl)-L-serine + H2O = (5Z,8Z,11Z,14Z)-eicosatetraenoate + L-serine. It carries out the reaction (5Z,8Z,11Z,14Z)-eicosatetraenoate + L-phenylalanine = N-(5Z,8Z,11Z,14Z-eicosatetraenoyl)-L-phenylalanine + H2O. The catalysed reaction is N-(9Z-octadecenoyl)-L-leucine + H2O = L-leucine + (9Z)-octadecenoate. It catalyses the reaction L-phenylalanine + (9Z)-octadecenoate = N-(9Z-octadecenoyl)-L-phenylalanine + H2O. It participates in amino-acid metabolism. Its pathway is energy metabolism; electron transfer. It functions in the pathway lipid metabolism; fatty acid metabolism. Lipoproteins are powerful coactivators of PM20D1 activity in vitro and NAA biosynthesis in vivo. Its function is as follows. Secreted enzyme that regulates the endogenous N-fatty acyl amino acid (NAAs) tissue and circulating levels by functioning as a bidirectional NAA synthase/hydrolase. It condenses free fatty acids and free amino acids to generate NAAs and bidirectionally catalyzes the reverse hydrolysis reaction. Some of these NAAs stimulate oxidative metabolism via mitochondrial uncoupling, increasing energy expenditure in a UPC1-independent manner. Thereby, this secreted protein may indirectly regulate whole body energy expenditure. PM20D1 circulates in tight association with both low- and high-density (LDL and HDL,respectively) lipoprotein particles. This Danio rerio (Zebrafish) protein is N-fatty-acyl-amino acid synthase/hydrolase PM20D1.1.